We begin with the raw amino-acid sequence, 201 residues long: Potassium-transporting ATPase KdpC subunit (201 aa).

Residues 7–27 (PAIVLLLVLTAITGLAYPLAM) form a helical membrane-spanning segment.

This sequence belongs to the KdpC family. The system is composed of three essential subunits: KdpA, KdpB and KdpC.

Its subcellular location is the cell inner membrane. Part of the high-affinity ATP-driven potassium transport (or Kdp) system, which catalyzes the hydrolysis of ATP coupled with the electrogenic transport of potassium into the cytoplasm. This subunit acts as a catalytic chaperone that increases the ATP-binding affinity of the ATP-hydrolyzing subunit KdpB by the formation of a transient KdpB/KdpC/ATP ternary complex. The polypeptide is Potassium-transporting ATPase KdpC subunit (Bradyrhizobium diazoefficiens (strain JCM 10833 / BCRC 13528 / IAM 13628 / NBRC 14792 / USDA 110)).